The sequence spans 422 residues: Serine--tRNA ligase (422 aa).

Position 229–231 (229–231) interacts with L-serine; the sequence is TAE. Position 258-260 (258-260) interacts with ATP; sequence RRE. E281 is an L-serine binding site. Position 345–348 (345–348) interacts with ATP; it reads EISS. S379 is a binding site for L-serine.

The protein belongs to the class-II aminoacyl-tRNA synthetase family. Type-1 seryl-tRNA synthetase subfamily. Homodimer. The tRNA molecule binds across the dimer.

It is found in the cytoplasm. It carries out the reaction tRNA(Ser) + L-serine + ATP = L-seryl-tRNA(Ser) + AMP + diphosphate + H(+). The enzyme catalyses tRNA(Sec) + L-serine + ATP = L-seryl-tRNA(Sec) + AMP + diphosphate + H(+). It participates in aminoacyl-tRNA biosynthesis; selenocysteinyl-tRNA(Sec) biosynthesis; L-seryl-tRNA(Sec) from L-serine and tRNA(Sec): step 1/1. Catalyzes the attachment of serine to tRNA(Ser). Is also able to aminoacylate tRNA(Sec) with serine, to form the misacylated tRNA L-seryl-tRNA(Sec), which will be further converted into selenocysteinyl-tRNA(Sec). The protein is Serine--tRNA ligase of Methanosarcina mazei (strain ATCC BAA-159 / DSM 3647 / Goe1 / Go1 / JCM 11833 / OCM 88) (Methanosarcina frisia).